A 136-amino-acid chain; its full sequence is Nucleoside diphosphate kinase (136 aa).

Lys-10, Phe-58, Arg-86, Thr-92, Arg-104, and Asn-114 together coordinate ATP. His-117 serves as the catalytic Pros-phosphohistidine intermediate.

The protein belongs to the NDK family. Homotetramer. Requires Mg(2+) as cofactor.

The protein localises to the cytoplasm. It carries out the reaction a 2'-deoxyribonucleoside 5'-diphosphate + ATP = a 2'-deoxyribonucleoside 5'-triphosphate + ADP. The catalysed reaction is a ribonucleoside 5'-diphosphate + ATP = a ribonucleoside 5'-triphosphate + ADP. Functionally, major role in the synthesis of nucleoside triphosphates other than ATP. The ATP gamma phosphate is transferred to the NDP beta phosphate via a ping-pong mechanism, using a phosphorylated active-site intermediate. The sequence is that of Nucleoside diphosphate kinase from Corynebacterium glutamicum (strain R).